A 211-amino-acid chain; its full sequence is Imidazole glycerol phosphate synthase subunit HisH (211 aa).

The region spanning 3 to 211 is the Glutamine amidotransferase type-1 domain; the sequence is VIAVIDYDMG…VNQIRVKAIA (209 aa). C81 functions as the Nucleophile in the catalytic mechanism. Active-site residues include H186 and E188.

As to quaternary structure, heterodimer of HisH and HisF.

It is found in the cytoplasm. The enzyme catalyses 5-[(5-phospho-1-deoxy-D-ribulos-1-ylimino)methylamino]-1-(5-phospho-beta-D-ribosyl)imidazole-4-carboxamide + L-glutamine = D-erythro-1-(imidazol-4-yl)glycerol 3-phosphate + 5-amino-1-(5-phospho-beta-D-ribosyl)imidazole-4-carboxamide + L-glutamate + H(+). The catalysed reaction is L-glutamine + H2O = L-glutamate + NH4(+). The protein operates within amino-acid biosynthesis; L-histidine biosynthesis; L-histidine from 5-phospho-alpha-D-ribose 1-diphosphate: step 5/9. Functionally, IGPS catalyzes the conversion of PRFAR and glutamine to IGP, AICAR and glutamate. The HisH subunit catalyzes the hydrolysis of glutamine to glutamate and ammonia as part of the synthesis of IGP and AICAR. The resulting ammonia molecule is channeled to the active site of HisF. The chain is Imidazole glycerol phosphate synthase subunit HisH from Gloeothece citriformis (strain PCC 7424) (Cyanothece sp. (strain PCC 7424)).